A 990-amino-acid polypeptide reads, in one-letter code: Importin beta-like protein kap111 (990 aa).

This sequence belongs to the importin beta family.

The protein resides in the nucleus. Functionally, functions as a component of the nuclear pore complex (NPC). NPC components, collectively referred to as nucleoporins (NUPs), can play the role of both NPC structural components and of docking or interaction partners for transiently associated nuclear transport factors. Active directional transport is assured by both, a Phe-Gly (FG) repeat affinity gradient for these transport factors across the NPC and a transport cofactor concentration gradient across the nuclear envelope. In Schizosaccharomyces pombe (strain 972 / ATCC 24843) (Fission yeast), this protein is Importin beta-like protein kap111 (kap111).